The chain runs to 311 residues: Ribosomal RNA small subunit methyltransferase H (311 aa).

Residues 32-34 (AGH), Asp52, Phe79, Asp100, and Gln107 contribute to the S-adenosyl-L-methionine site.

This sequence belongs to the methyltransferase superfamily. RsmH family.

It is found in the cytoplasm. The enzyme catalyses cytidine(1402) in 16S rRNA + S-adenosyl-L-methionine = N(4)-methylcytidine(1402) in 16S rRNA + S-adenosyl-L-homocysteine + H(+). Functionally, specifically methylates the N4 position of cytidine in position 1402 (C1402) of 16S rRNA. The sequence is that of Ribosomal RNA small subunit methyltransferase H from Staphylococcus carnosus (strain TM300).